The sequence spans 350 residues: Biotin synthase (350 aa).

One can recognise a Radical SAM core domain in the interval 38–265 (NHVQVSTLLS…MSAVRLSAGR (228 aa)). [4Fe-4S] cluster-binding residues include Cys-53, Cys-57, and Cys-60. Cys-97, Cys-128, Cys-188, and Arg-260 together coordinate [2Fe-2S] cluster.

The protein belongs to the radical SAM superfamily. Biotin synthase family. Homodimer. [4Fe-4S] cluster is required as a cofactor. The cofactor is [2Fe-2S] cluster.

It catalyses the reaction (4R,5S)-dethiobiotin + (sulfur carrier)-SH + 2 reduced [2Fe-2S]-[ferredoxin] + 2 S-adenosyl-L-methionine = (sulfur carrier)-H + biotin + 2 5'-deoxyadenosine + 2 L-methionine + 2 oxidized [2Fe-2S]-[ferredoxin]. The protein operates within cofactor biosynthesis; biotin biosynthesis; biotin from 7,8-diaminononanoate: step 2/2. Its function is as follows. Catalyzes the conversion of dethiobiotin (DTB) to biotin by the insertion of a sulfur atom into dethiobiotin via a radical-based mechanism. The sequence is that of Biotin synthase from Vibrio atlanticus (strain LGP32) (Vibrio splendidus (strain Mel32)).